Reading from the N-terminus, the 270-residue chain is Putative phosphoenolpyruvate synthase regulatory protein (270 aa).

Residue 151-158 (GVSRCGKT) coordinates ADP.

Belongs to the pyruvate, phosphate/water dikinase regulatory protein family. PSRP subfamily.

It catalyses the reaction [pyruvate, water dikinase] + ADP = [pyruvate, water dikinase]-phosphate + AMP + H(+). The enzyme catalyses [pyruvate, water dikinase]-phosphate + phosphate + H(+) = [pyruvate, water dikinase] + diphosphate. Its function is as follows. Bifunctional serine/threonine kinase and phosphorylase involved in the regulation of the phosphoenolpyruvate synthase (PEPS) by catalyzing its phosphorylation/dephosphorylation. This chain is Putative phosphoenolpyruvate synthase regulatory protein, found in Methylobacillus flagellatus (strain ATCC 51484 / DSM 6875 / VKM B-1610 / KT).